We begin with the raw amino-acid sequence, 71 residues long: Stathmin-1-B (71 aa).

The stretch at 1–67 (KREHEKEVLQ…EIRKGKECKE (67 aa)) forms a coiled coil. The 71-residue stretch at 1–71 (KREHEKEVLQ…GKECKEPSED (71 aa)) folds into the SLD domain.

The protein belongs to the stathmin family. As to quaternary structure, binds to two alpha/beta-tubulin heterodimers. In terms of processing, from unphosphorylated forms to highly phosphorylated ones in the mature egg, followed by progressive dephosphorylation from the mid-blastula to the tailbud stage. As to expression, ubiquitous. Mostly abundant in brain and oocytes.

It localises to the cytoplasm. Its subcellular location is the cytoskeleton. Its function is as follows. Involved in the regulation of the microtubule (MT) filament system by destabilizing microtubules. It prevents assembly and promotes disassembly of microtubules. The protein is Stathmin-1-B (stmn1-b) of Xenopus laevis (African clawed frog).